Reading from the N-terminus, the 185-residue chain is dCTP deaminase (185 aa).

DCTP is bound by residues Lys-107–Arg-112, Thr-131–Glu-133, Gln-152, Tyr-166, and Gln-176. Residue Glu-133 is the Proton donor/acceptor of the active site.

The protein belongs to the dCTP deaminase family. In terms of assembly, homotrimer.

It catalyses the reaction dCTP + H2O + H(+) = dUTP + NH4(+). Its pathway is pyrimidine metabolism; dUMP biosynthesis; dUMP from dCTP (dUTP route): step 1/2. Its function is as follows. Catalyzes the deamination of dCTP to dUTP. This is dCTP deaminase from Anaplasma marginale (strain Florida).